The primary structure comprises 259 residues: Probable ABC transporter permease protein RC0129 (259 aa).

Helical transmembrane passes span 13–35, 49–69, 148–168, 195–215, and 237–257; these read TVKF…SSII, LFIG…SGAV, VITA…IGVM, PIDV…ISII, and AVVN…ELFF.

This sequence belongs to the MlaE permease family.

Its subcellular location is the cell inner membrane. Could be part of an ABC transporter complex. The polypeptide is Probable ABC transporter permease protein RC0129 (Rickettsia conorii (strain ATCC VR-613 / Malish 7)).